The chain runs to 367 residues: SIHRVPLKKGKSLRKQLKDHGLLEDFLKKHPYNPASKYHPVLTATESYEPMTNYMDASYYGTISIGTPQQDFSVIFDTGSSNLWVPSIYCKSSACSNHKRFDPSKSSTYVSTNETVYIAYGTGSMSGILGYDTVAVSSIDVQNQIFGLSETEPGSFFYYCNFDGILGLAFPSISSSGATPVFDNMMSQHLVAQDLFSVYLSKDGETGSFVLFGGIDPNYTTKGIYWVPLSAETYWQITMDRVTVGNKYVACFFTCQAIVDTGTSLLVMPQGAYNRIIKDLGVSSDGEISCDDISKLPDVTFHINGHAFTLPASAYVLNEDGSCMLGFENMGTPTELGEQWILGDVFIREYYVIFDRANNKVGLSPLS.

Positions Ser1–Leu42 are cleaved as a propeptide — activation peptide. The 306-residue stretch at Tyr59 to Ser364 folds into the Peptidase A1 domain. The active site involves Asp77. A disulfide bridge links Cys90 with Cys95. Asn113 is a glycosylation site (N-linked (GlcNAc...) asparagine). The cysteines at positions 251 and 255 are disulfide-linked. Asp260 is an active-site residue. A disulfide bridge connects residues Cys290 and Cys323.

It belongs to the peptidase A1 family.

It carries out the reaction Preferential cleavage: hydrophobic, preferably aromatic, residues in P1 and P1' positions. Cleaves 1-Phe-|-Val-2, 4-Gln-|-His-5, 13-Glu-|-Ala-14, 14-Ala-|-Leu-15, 15-Leu-|-Tyr-16, 16-Tyr-|-Leu-17, 23-Gly-|-Phe-24, 24-Phe-|-Phe-25 and 25-Phe-|-Tyr-26 bonds in the B chain of insulin.. Functionally, shows particularly broad specificity; although bonds involving phenylalanine and leucine are preferred, many others are also cleaved to some extent. The protein is Pepsin A (PGA) of Gallus gallus (Chicken).